A 322-amino-acid chain; its full sequence is Ribosomal RNA small subunit methyltransferase H (322 aa).

Residues 40 to 42, Asp60, Phe84, Asp106, and Gln113 each bind S-adenosyl-L-methionine; that span reads GGH.

It belongs to the methyltransferase superfamily. RsmH family.

The protein localises to the cytoplasm. The enzyme catalyses cytidine(1402) in 16S rRNA + S-adenosyl-L-methionine = N(4)-methylcytidine(1402) in 16S rRNA + S-adenosyl-L-homocysteine + H(+). Its function is as follows. Specifically methylates the N4 position of cytidine in position 1402 (C1402) of 16S rRNA. The polypeptide is Ribosomal RNA small subunit methyltransferase H (Mannheimia succiniciproducens (strain KCTC 0769BP / MBEL55E)).